The following is a 168-amino-acid chain: Glycine-rich RNA-binding protein 2 (168 aa).

Residues 8–86 (YRCFVGGLAW…RNITVNQAQS (79 aa)) form the RRM domain. Residues 148 to 168 (GYGGGGGYGGNRGDSGGNWRN) are disordered.

Its function is as follows. Possibly has a role in RNA transcription or processing during stress. This Sorghum bicolor (Sorghum) protein is Glycine-rich RNA-binding protein 2 (GRP2).